Consider the following 231-residue polypeptide: Flagellar L-ring protein (231 aa).

The N-terminal stretch at Met-1 to Gly-18 is a signal peptide. A lipid anchor (N-palmitoyl cysteine) is attached at Cys-19. Cys-19 is lipidated: S-diacylglycerol cysteine. A disordered region spans residues Leu-118 to Ser-141.

It belongs to the FlgH family. The basal body constitutes a major portion of the flagellar organelle and consists of four rings (L,P,S, and M) mounted on a central rod.

The protein resides in the cell outer membrane. Its subcellular location is the bacterial flagellum basal body. Functionally, assembles around the rod to form the L-ring and probably protects the motor/basal body from shearing forces during rotation. The protein is Flagellar L-ring protein of Pseudomonas aeruginosa (strain LESB58).